The primary structure comprises 239 residues: Large ribosomal subunit protein uL1 (239 aa).

The protein belongs to the universal ribosomal protein uL1 family. In terms of assembly, part of the 50S ribosomal subunit.

Functionally, binds directly to 23S rRNA. The L1 stalk is quite mobile in the ribosome, and is involved in E site tRNA release. In terms of biological role, protein L1 is also a translational repressor protein, it controls the translation of the L11 operon by binding to its mRNA. The polypeptide is Large ribosomal subunit protein uL1 (Acidothermus cellulolyticus (strain ATCC 43068 / DSM 8971 / 11B)).